The following is a 352-amino-acid chain: tRNA N6-adenosine threonylcarbamoyltransferase (352 aa).

Residues His-115 and His-119 each contribute to the Fe cation site. Residues Leu-138 to Gly-142, Asp-171, Gly-184, and Asn-276 each bind substrate. Residue Asp-304 coordinates Fe cation.

This sequence belongs to the KAE1 / TsaD family. It depends on Fe(2+) as a cofactor.

The protein localises to the cytoplasm. The enzyme catalyses L-threonylcarbamoyladenylate + adenosine(37) in tRNA = N(6)-L-threonylcarbamoyladenosine(37) in tRNA + AMP + H(+). Functionally, required for the formation of a threonylcarbamoyl group on adenosine at position 37 (t(6)A37) in tRNAs that read codons beginning with adenine. Is involved in the transfer of the threonylcarbamoyl moiety of threonylcarbamoyl-AMP (TC-AMP) to the N6 group of A37, together with TsaE and TsaB. TsaD likely plays a direct catalytic role in this reaction. The protein is tRNA N6-adenosine threonylcarbamoyltransferase of Xanthomonas axonopodis pv. citri (strain 306).